Consider the following 263-residue polypeptide: Phosphatidylglycerol--prolipoprotein diacylglyceryl transferase (263 aa).

The next 4 helical transmembrane spans lie at 10–30, 56–76, 91–111, and 117–137; these read VAITLGPLQFRWYGLMYLFGF, MVTYVILGVVLGGRIGYILFY, IWNGGMSFHGGLLGVVFAMWL, and GLGFMDVSDFVAPLIPPGLFF. Position 139 (Arg139) interacts with a 1,2-diacyl-sn-glycero-3-phospho-(1'-sn-glycerol). 3 consecutive transmembrane segments (helical) span residues 171–191, 199–219, and 231–251; these read PSQLYECALEGVILFLALWVF, GHVSGLFALLYGVFRFTVEFV, and FGWLTMGQVLCLPLIMLGLWL.

Belongs to the Lgt family.

Its subcellular location is the cell inner membrane. It catalyses the reaction L-cysteinyl-[prolipoprotein] + a 1,2-diacyl-sn-glycero-3-phospho-(1'-sn-glycerol) = an S-1,2-diacyl-sn-glyceryl-L-cysteinyl-[prolipoprotein] + sn-glycerol 1-phosphate + H(+). It functions in the pathway protein modification; lipoprotein biosynthesis (diacylglyceryl transfer). In terms of biological role, catalyzes the transfer of the diacylglyceryl group from phosphatidylglycerol to the sulfhydryl group of the N-terminal cysteine of a prolipoprotein, the first step in the formation of mature lipoproteins. The chain is Phosphatidylglycerol--prolipoprotein diacylglyceryl transferase from Nitratidesulfovibrio vulgaris (strain DP4) (Desulfovibrio vulgaris).